The sequence spans 197 residues: 3-isopropylmalate dehydratase small subunit (197 aa).

The protein belongs to the LeuD family. LeuD type 1 subfamily. Heterodimer of LeuC and LeuD.

The catalysed reaction is (2R,3S)-3-isopropylmalate = (2S)-2-isopropylmalate. Its pathway is amino-acid biosynthesis; L-leucine biosynthesis; L-leucine from 3-methyl-2-oxobutanoate: step 2/4. Catalyzes the isomerization between 2-isopropylmalate and 3-isopropylmalate, via the formation of 2-isopropylmaleate. The protein is 3-isopropylmalate dehydratase small subunit of Shouchella clausii (strain KSM-K16) (Alkalihalobacillus clausii).